Here is a 346-residue protein sequence, read N- to C-terminus: N(4)-(beta-N-acetylglucosaminyl)-L-asparaginase (346 aa).

The N-terminal stretch at 1-23 (MARKSNLPVLLVPFLLCQALVRC) is a signal peptide. Ser-24 bears the Blocked amino end (Ser) mark. The N-linked (GlcNAc...) asparagine glycan is linked to Asn-38. 2 disulfide bridges follow: Cys-64–Cys-69 and Cys-163–Cys-179. Thr-206 serves as the catalytic Nucleophile. Residues 234–237 (RVGD) and 257–260 (TGNG) contribute to the substrate site. Cys-286 and Cys-306 are oxidised to a cystine. Residue Asn-308 is glycosylated (N-linked (GlcNAc...) asparagine). Cys-317 and Cys-345 are oxidised to a cystine.

Belongs to the Ntn-hydrolase family. As to quaternary structure, heterotetramer of two alpha and two beta chains arranged as a dimer of alpha/beta heterodimers. Cleaved into an alpha and beta chain by autocatalysis; this activates the enzyme. The N-terminal residue of the beta subunit is responsible for the nucleophile hydrolase activity. Post-translationally, N-glycosylated.

It localises to the lysosome. The enzyme catalyses N(4)-(beta-N-acetyl-D-glucosaminyl)-L-asparagine + H2O = N-acetyl-beta-D-glucosaminylamine + L-aspartate + H(+). Its function is as follows. Cleaves the GlcNAc-Asn bond which joins oligosaccharides to the peptide of asparagine-linked glycoproteins. The chain is N(4)-(beta-N-acetylglucosaminyl)-L-asparaginase (AGA) from Homo sapiens (Human).